We begin with the raw amino-acid sequence, 154 residues long: Endoribonuclease YbeY (154 aa).

The Zn(2+) site is built by histidine 113, histidine 117, and histidine 123.

It belongs to the endoribonuclease YbeY family. Zn(2+) is required as a cofactor.

It is found in the cytoplasm. Single strand-specific metallo-endoribonuclease involved in late-stage 70S ribosome quality control and in maturation of the 3' terminus of the 16S rRNA. The chain is Endoribonuclease YbeY from Ehrlichia canis (strain Jake).